The sequence spans 398 residues: Acetate kinase (398 aa).

N8 contributes to the Mg(2+) binding site. Position 15 (K15) interacts with ATP. R89 provides a ligand contact to substrate. Catalysis depends on D146, which acts as the Proton donor/acceptor. ATP is bound by residues 206–210 (HIGNG), 283–285 (DMR), and 331–335 (GMGEN). Residue E383 coordinates Mg(2+).

It belongs to the acetokinase family. Homodimer. The cofactor is Mg(2+). Requires Mn(2+) as cofactor.

The protein localises to the cytoplasm. The catalysed reaction is acetate + ATP = acetyl phosphate + ADP. Its pathway is metabolic intermediate biosynthesis; acetyl-CoA biosynthesis; acetyl-CoA from acetate: step 1/2. Functionally, catalyzes the formation of acetyl phosphate from acetate and ATP. Can also catalyze the reverse reaction. The polypeptide is Acetate kinase (Streptococcus pyogenes serotype M1).